A 112-amino-acid chain; its full sequence is UPF0145 protein MmarC6_1828 (112 aa).

The protein belongs to the UPF0145 family.

This is UPF0145 protein MmarC6_1828 from Methanococcus maripaludis (strain C6 / ATCC BAA-1332).